A 376-amino-acid chain; its full sequence is Queuine tRNA-ribosyltransferase (376 aa).

Aspartate 93 functions as the Proton acceptor in the catalytic mechanism. Residues 93–97 (DSGGF), aspartate 147, glutamine 190, and glycine 217 contribute to the substrate site. The interval 248–254 (GVGTPDD) is RNA binding. The active-site Nucleophile is aspartate 267. An RNA binding; important for wobble base 34 recognition region spans residues 272–276 (TRSGR).

This sequence belongs to the queuine tRNA-ribosyltransferase family. Homodimer. Within each dimer, one monomer is responsible for RNA recognition and catalysis, while the other monomer binds to the replacement base PreQ1.

It catalyses the reaction 7-aminomethyl-7-carbaguanine + guanosine(34) in tRNA = 7-aminomethyl-7-carbaguanosine(34) in tRNA + guanine. The protein operates within tRNA modification; tRNA-queuosine biosynthesis. Its function is as follows. Catalyzes the base-exchange of a guanine (G) residue with the queuine precursor 7-aminomethyl-7-deazaguanine (PreQ1) at position 34 (anticodon wobble position) in tRNAs with GU(N) anticodons (tRNA-Asp, -Asn, -His and -Tyr). Catalysis occurs through a double-displacement mechanism. The nucleophile active site attacks the C1' of nucleotide 34 to detach the guanine base from the RNA, forming a covalent enzyme-RNA intermediate. The proton acceptor active site deprotonates the incoming PreQ1, allowing a nucleophilic attack on the C1' of the ribose to form the product. After dissociation, two additional enzymatic reactions on the tRNA convert PreQ1 to queuine (Q), resulting in the hypermodified nucleoside queuosine (7-(((4,5-cis-dihydroxy-2-cyclopenten-1-yl)amino)methyl)-7-deazaguanosine). The polypeptide is Queuine tRNA-ribosyltransferase (Rhizobium meliloti (strain 1021) (Ensifer meliloti)).